Reading from the N-terminus, the 691-residue chain is Transcription termination factor Rho (691 aa).

Positions Ile48–Glu303 are disordered. Over residues Asp50–Glu64 the composition is skewed to basic and acidic residues. Low complexity-rich tracts occupy residues Arg65–Glu92 and Asp105–Ala119. 2 stretches are compositionally biased toward basic and acidic residues: residues Glu120–Arg158 and Asp188–Arg273. Residues Leu307–Pro390 enclose the Rho RNA-BD domain. Residues Gly433–Gly438, Lys445–Met450, and Arg476 each bind ATP.

This sequence belongs to the Rho family. In terms of assembly, homohexamer. The homohexamer assembles into an open ring structure.

Its function is as follows. Facilitates transcription termination by a mechanism that involves Rho binding to the nascent RNA, activation of Rho's RNA-dependent ATPase activity, and release of the mRNA from the DNA template. This Micrococcus luteus (Micrococcus lysodeikticus) protein is Transcription termination factor Rho.